Here is a 224-residue protein sequence, read N- to C-terminus: V-type proton ATPase subunit S1-like protein (224 aa).

The chain crosses the membrane as a helical span at residues 147-167 (PAFLIGLAMSLILLLVLAYAL).

Belongs to the vacuolar ATPase subunit S1 family.

It is found in the membrane. The chain is V-type proton ATPase subunit S1-like protein (ATP6AP1L) from Homo sapiens (Human).